The chain runs to 91 residues: Small ribosomal subunit protein uS19 (91 aa).

This sequence belongs to the universal ribosomal protein uS19 family.

Its function is as follows. Protein S19 forms a complex with S13 that binds strongly to the 16S ribosomal RNA. In Pseudomonas fluorescens (strain SBW25), this protein is Small ribosomal subunit protein uS19.